Reading from the N-terminus, the 417-residue chain is MLKKDMNIADYDPELFKAIQNETLRQEEHIELIASENYTSPRVMEAQGSQLTNKYAEGYPGKRYYGGCEYVDVVETLAIERAKELFGATYANVQPHSGSQANSAVYMALLKPGDTVLGMNLAHGGHLTHGSPVNFSGKLYNIIPYGIDESGKIDYDEMERLAVEHKPKMMIGGFSAYSGIVDWAKMREIADKIGAYLFVDMAHVAGLIAAGVYPNPVPHAHVVTSTTHKTLAGPRGGVILSAADDEDLYKKLNSAVFPGGQGGPLMHVIAGKAVAFKEALEPEFKVYQQQVVNNAKAMVEVFLERGYKIVSGGTSNHLMLVDLIGRDLTGKEADAALGSANITVNKNSVPNDPRSPFVTSGVRIGTPAITRRGFKEAESKELTGWICDILDDASNPAVIERVKGQVLALCARFPVYG.

Residues Leu121 and 125 to 127 (GHL) each bind (6S)-5,6,7,8-tetrahydrofolate. Lys229 is modified (N6-(pyridoxal phosphate)lysine). 355 to 357 (SPF) contributes to the (6S)-5,6,7,8-tetrahydrofolate binding site.

The protein belongs to the SHMT family. Homodimer. Pyridoxal 5'-phosphate is required as a cofactor.

The protein localises to the cytoplasm. It carries out the reaction (6R)-5,10-methylene-5,6,7,8-tetrahydrofolate + glycine + H2O = (6S)-5,6,7,8-tetrahydrofolate + L-serine. It functions in the pathway one-carbon metabolism; tetrahydrofolate interconversion. It participates in amino-acid biosynthesis; glycine biosynthesis; glycine from L-serine: step 1/1. Its function is as follows. Catalyzes the reversible interconversion of serine and glycine with tetrahydrofolate (THF) serving as the one-carbon carrier. This reaction serves as the major source of one-carbon groups required for the biosynthesis of purines, thymidylate, methionine, and other important biomolecules. Also exhibits THF-independent aldolase activity toward beta-hydroxyamino acids, producing glycine and aldehydes, via a retro-aldol mechanism. The sequence is that of Serine hydroxymethyltransferase from Shewanella baltica (strain OS195).